Reading from the N-terminus, the 260-residue chain is Hemin import ATP-binding protein HmuV (260 aa).

The ABC transporter domain occupies 6 to 242 (LSGRNISMKY…ERIEQVYGYR (237 aa)). 38–45 (GPNGAGKS) serves as a coordination point for ATP.

The protein belongs to the ABC transporter superfamily. Heme (hemin) importer (TC 3.A.1.14.5) family. As to quaternary structure, the complex is composed of two ATP-binding proteins (HmuV), two transmembrane proteins (HmuU) and a solute-binding protein (HmuT).

The protein localises to the cell inner membrane. Functionally, part of the ABC transporter complex HmuTUV involved in hemin import. Responsible for energy coupling to the transport system. The chain is Hemin import ATP-binding protein HmuV from Vibrio parahaemolyticus serotype O3:K6 (strain RIMD 2210633).